The primary structure comprises 58 residues: uncharacterized protein (58 aa).

A helical transmembrane segment spans residues Phe5–Ile27.

It localises to the membrane. This is an uncharacterized protein from Saccharomyces cerevisiae (strain ATCC 204508 / S288c) (Baker's yeast).